Reading from the N-terminus, the 331-residue chain is Ribosomal large subunit pseudouridine synthase D (331 aa).

Positions 25–97 (RRFDAVLAEL…IPLNVLYEDD (73 aa)) constitute an S4 RNA-binding domain. Asp-145 is an active-site residue.

This sequence belongs to the pseudouridine synthase RluA family.

The protein resides in the cytoplasm. It catalyses the reaction uridine(1911/1915/1917) in 23S rRNA = pseudouridine(1911/1915/1917) in 23S rRNA. Functionally, responsible for synthesis of pseudouridine from uracil at positions 1911, 1915 and 1917 in 23S ribosomal RNA. The sequence is that of Ribosomal large subunit pseudouridine synthase D (rluD) from Xanthomonas campestris pv. campestris (strain ATCC 33913 / DSM 3586 / NCPPB 528 / LMG 568 / P 25).